The chain runs to 934 residues: Oxysterol-binding protein-related protein 6 (934 aa).

Residues 1-62 form a disordered region; sequence MSSDEKGISP…RQLLEPEPVP (62 aa). Position 2 is an N-acetylserine (Ser-2). Residues 14-29 are compositionally biased toward low complexity; that stretch reads TSTPTHRSASSSTSSQ. A compositionally biased stretch (basic and acidic residues) spans 30–40; sequence RDSRQSIHILE. Ser-35 bears the Phosphoserine mark. A compositionally biased stretch (polar residues) spans 42–53; it reads TASSSTEPSVSR. A PH domain is found at 86–181; the sequence is PDKHEGFMLK…WVSKLRHHRL (96 aa). 2 positions are modified to phosphoserine: Ser-190 and Ser-290.

The protein belongs to the OSBP family. Homodimer. Interacts with OSBPL3. In terms of tissue distribution, expressed in brain and striated muscle (at protein level). Widely expressed. Expressed in skeletal muscle.

Its subcellular location is the cytoplasm. It localises to the cytosol. It is found in the endoplasmic reticulum membrane. The protein resides in the nucleus envelope. The protein localises to the cell membrane. Its subcellular location is the endosome membrane. In terms of biological role, regulates cellular transport and efflux of cholesterol. Plays a role in phosphatidylinositol-4-phophate (PI4P) turnover at the neuronal membrane. Binds via its PH domain PI4P, phosphatidylinositol-4,5-diphosphate, phosphatidylinositol-3,4,5-triphosphate, and phosphatidic acid. Weakly binds 25-hydroxycholesterol. The protein is Oxysterol-binding protein-related protein 6 (OSBPL6) of Homo sapiens (Human).